A 135-amino-acid polypeptide reads, in one-letter code: Protein NrdI (135 aa).

The protein belongs to the NrdI family.

In terms of biological role, probably involved in ribonucleotide reductase function. The chain is Protein NrdI from Brucella abortus (strain S19).